The primary structure comprises 422 residues: Enolase (422 aa).

Residue Q162 coordinates (2R)-2-phosphoglycerate. The active-site Proton donor is E204. D241, E284, and D311 together coordinate Mg(2+). Positions 336, 365, 366, and 387 each coordinate (2R)-2-phosphoglycerate. The Proton acceptor role is filled by K336.

The protein belongs to the enolase family. Mg(2+) serves as cofactor.

It is found in the cytoplasm. The protein resides in the secreted. Its subcellular location is the cell surface. The catalysed reaction is (2R)-2-phosphoglycerate = phosphoenolpyruvate + H2O. The protein operates within carbohydrate degradation; glycolysis; pyruvate from D-glyceraldehyde 3-phosphate: step 4/5. Functionally, catalyzes the reversible conversion of 2-phosphoglycerate (2-PG) into phosphoenolpyruvate (PEP). It is essential for the degradation of carbohydrates via glycolysis. In Bartonella quintana (strain Toulouse) (Rochalimaea quintana), this protein is Enolase.